The following is a 365-amino-acid chain: Phosphoserine aminotransferase (365 aa).

Residue Arg-40 participates in L-glutamate binding. Residues 74-75 (AS), Phe-99, Thr-155, Asp-177, and Gln-200 each bind pyridoxal 5'-phosphate. Lys-201 carries the post-translational modification N6-(pyridoxal phosphate)lysine. Position 241–242 (241–242 (NT)) interacts with pyridoxal 5'-phosphate.

It belongs to the class-V pyridoxal-phosphate-dependent aminotransferase family. SerC subfamily. Homodimer. Requires pyridoxal 5'-phosphate as cofactor.

Its subcellular location is the cytoplasm. The catalysed reaction is O-phospho-L-serine + 2-oxoglutarate = 3-phosphooxypyruvate + L-glutamate. The enzyme catalyses 4-(phosphooxy)-L-threonine + 2-oxoglutarate = (R)-3-hydroxy-2-oxo-4-phosphooxybutanoate + L-glutamate. Its pathway is amino-acid biosynthesis; L-serine biosynthesis; L-serine from 3-phospho-D-glycerate: step 2/3. Its function is as follows. Catalyzes the reversible conversion of 3-phosphohydroxypyruvate to phosphoserine and of 3-hydroxy-2-oxo-4-phosphonooxybutanoate to phosphohydroxythreonine. This chain is Phosphoserine aminotransferase, found in Lactococcus lactis subsp. cremoris (strain MG1363).